A 223-amino-acid polypeptide reads, in one-letter code: uncharacterized protein (223 aa).

Transmembrane regions (helical) follow at residues 28–48 (LSNT…GLIT), 59–79 (LIVQ…ITLA), 88–108 (AFNQ…MFFI), 128–148 (IVGL…VWLS), and 176–196 (AWAI…YMIV).

It localises to the cell membrane. This is an uncharacterized protein from Mycoplasma pneumoniae (strain ATCC 29342 / M129 / Subtype 1) (Mycoplasmoides pneumoniae).